The sequence spans 354 residues: Rhodopsin (354 aa).

Topologically, residues 1–36 (MNGTEGPYFYIPMVNTTGIVRSPYDYPQYYLVNPAA) are extracellular. N-linked (GlcNAc...) asparagine glycosylation is found at N2 and N15. The chain crosses the membrane as a helical span at residues 37-61 (YAALGAYMFFLILVGFPINFLTLYV). Residues 62–73 (TIEHKKLRTPLN) are Cytoplasmic-facing. Residues 74–96 (YILLNLAVANLFMVFGGFTTTMY) traverse the membrane as a helical segment. Over 97–110 (TSMHGYFVLGRLGC) the chain is Extracellular. A disulfide bridge links C110 with C187. A helical membrane pass occupies residues 111–133 (NLEGFFATLGGEIALWSLVVLAV). The 'Ionic lock' involved in activated form stabilization signature appears at 134–136 (ERW). The Cytoplasmic portion of the chain corresponds to 134–152 (ERWMVVCKPISNFRFGENH). Residues 153 to 173 (AIMGLAMTWLMASACAVPPLV) form a helical membrane-spanning segment. The Extracellular segment spans residues 174 to 202 (GWSRYIPEGMQCSCGVDYYTRAEGFNNES). Residue N200 is glycosylated (N-linked (GlcNAc...) asparagine). Residues 203 to 224 (FVVYMFCCHFMIPLIIVFFCYG) form a helical membrane-spanning segment. Residues 225–252 (RLLCAVKEAAAAQQESETTQRAEREVTR) lie on the Cytoplasmic side of the membrane. Residues 253 to 274 (MVVIMVIAFLVCWLPYASVAWW) traverse the membrane as a helical segment. Topologically, residues 275–286 (IFTHQGSEFGPV) are extracellular. The helical transmembrane segment at 287 to 308 (FMTIPAFFAKSSSIYNPMIYIC) threads the bilayer. N6-(retinylidene)lysine is present on K296. Residues 309–354 (MNKQFRNCMITTLCCGKNPFEEEEGASSTASKTEASSVSSSSVSPA) lie on the Cytoplasmic side of the membrane. S-palmitoyl cysteine attachment occurs at residues C322 and C323. The disordered stretch occupies residues 329–354 (EEEEGASSTASKTEASSVSSSSVSPA). A compositionally biased stretch (low complexity) spans 334–354 (ASSTASKTEASSVSSSSVSPA).

The protein belongs to the G-protein coupled receptor 1 family. Opsin subfamily. In terms of processing, phosphorylated on some or all of the serine and threonine residues present in the C-terminal region. Post-translationally, contains one covalently linked retinal chromophore.

It localises to the membrane. It is found in the cell projection. The protein resides in the cilium. Its subcellular location is the photoreceptor outer segment. Photoreceptor required for image-forming vision at low light intensity. While most salt water fish species use retinal as chromophore, most freshwater fish use 3-dehydroretinal, or a mixture of retinal and 3-dehydroretinal. Light-induced isomerization of 11-cis to all-trans retinal triggers a conformational change that activates signaling via G-proteins. Subsequent receptor phosphorylation mediates displacement of the bound G-protein alpha subunit by arrestin and terminates signaling. The polypeptide is Rhodopsin (rho) (Mullus surmuletus (Striped red mullet)).